A 173-amino-acid polypeptide reads, in one-letter code: Gamma-crystallin S-1 (173 aa).

2 Beta/gamma crystallin 'Greek key' domains span residues 2–40 (GKII…RVES) and 41–83 (DWWV…RMLP). The tract at residues 84–88 (HTGRS) is connecting peptide. Beta/gamma crystallin 'Greek key' domains follow at residues 89–129 (YRMR…QVMD) and 130–172 (GYWI…RRIM).

This sequence belongs to the beta/gamma-crystallin family.

In terms of biological role, crystallins are the dominant structural components of the vertebrate eye lens. The polypeptide is Gamma-crystallin S-1 (GS-1) (Chiloscyllium indicum (Slender bamboo shark)).